Consider the following 159-residue polypeptide: 17 kDa surface antigen (159 aa).

A signal peptide spans 1 to 19 (MKLLSKIMIIALATSMLQA). Cysteine 20 carries N-palmitoyl cysteine lipidation. Cysteine 20 carries S-diacylglycerol cysteine lipidation.

It belongs to the rickettsiale 17 kDa surface antigen family.

It localises to the cell outer membrane. The protein is 17 kDa surface antigen (omp) of Rickettsia conorii (strain ATCC VR-613 / Malish 7).